A 236-amino-acid polypeptide reads, in one-letter code: Purine nucleoside phosphorylase DeoD-type (236 aa).

His-4 is a binding site for a purine D-ribonucleoside. Phosphate is bound by residues Gly-20, Arg-24, Arg-43, and 87 to 90 (RVGT). Residues 179-181 (EME) and 203-204 (SD) contribute to the a purine D-ribonucleoside site. The Proton donor role is filled by Asp-204.

Belongs to the PNP/UDP phosphorylase family. As to quaternary structure, homohexamer; trimer of homodimers.

It catalyses the reaction a purine D-ribonucleoside + phosphate = a purine nucleobase + alpha-D-ribose 1-phosphate. It carries out the reaction a purine 2'-deoxy-D-ribonucleoside + phosphate = a purine nucleobase + 2-deoxy-alpha-D-ribose 1-phosphate. In terms of biological role, catalyzes the reversible phosphorolytic breakdown of the N-glycosidic bond in the beta-(deoxy)ribonucleoside molecules, with the formation of the corresponding free purine bases and pentose-1-phosphate. The chain is Purine nucleoside phosphorylase DeoD-type from Streptococcus pneumoniae (strain CGSP14).